Here is a 130-residue protein sequence, read N- to C-terminus: Small ribosomal subunit protein uS9 (130 aa).

Residues 101 to 130 (AGLLTRDARMKERKKPGLKKARKASQFSKR) form a disordered region. Basic residues predominate over residues 111 to 130 (KERKKPGLKKARKASQFSKR).

This sequence belongs to the universal ribosomal protein uS9 family.

This Levilactobacillus brevis (strain ATCC 367 / BCRC 12310 / CIP 105137 / JCM 1170 / LMG 11437 / NCIMB 947 / NCTC 947) (Lactobacillus brevis) protein is Small ribosomal subunit protein uS9.